Reading from the N-terminus, the 315-residue chain is Small ribosomal subunit biogenesis GTPase RsgA (315 aa).

In terms of domain architecture, CP-type G spans 82-246; sequence DQFKSKVLAA…LIDSPGFQEF (165 aa). Residues 130–133 and 184–192 contribute to the GTP site; these read NKID and GQSGMGKSS. Residues Cys270, Cys275, His277, and Cys283 each contribute to the Zn(2+) site.

The protein belongs to the TRAFAC class YlqF/YawG GTPase family. RsgA subfamily. Monomer. Associates with 30S ribosomal subunit, binds 16S rRNA. It depends on Zn(2+) as a cofactor.

The protein resides in the cytoplasm. In terms of biological role, one of several proteins that assist in the late maturation steps of the functional core of the 30S ribosomal subunit. Helps release RbfA from mature subunits. May play a role in the assembly of ribosomal proteins into the subunit. Circularly permuted GTPase that catalyzes slow GTP hydrolysis, GTPase activity is stimulated by the 30S ribosomal subunit. This is Small ribosomal subunit biogenesis GTPase RsgA from Ralstonia pickettii (strain 12J).